The following is a 229-amino-acid chain: Non-structural protein P8 (229 aa).

Over residues 13 to 31 (KMKHNQDRVEEPSQVRVDD) the composition is skewed to basic and acidic residues. Positions 13–46 (KMKHNQDRVEEPSQVRVDDTISQPPRYAPSAPMP) are disordered. A compositionally biased stretch (low complexity) spans 36-46 (PPRYAPSAPMP). 2 helical membrane-spanning segments follow: residues 119–139 (IIHT…VCTL) and 162–182 (SLNP…MVCA).

It belongs to the orbivirus NS3 family. Forms homooligomers via coiled-coil motif. Interacts with host OPTN; this interaction inhibits innate immune response.

The protein resides in the host cell membrane. It is found in the host Golgi apparatus. Its function is as follows. Plays a role in the inhibition of host innate immune response. Interacts with host OPTN and thus inhibits the recruitment of TBK1 to the host Golgi apparatus. In turn, downstream partner IRF3 cannot be activated and IFN-beta production is impaired. In terms of biological role, facilitates viral particle release either by increasing plasma membrane permeability through a viroporin-like activity or by viral budding. This is Non-structural protein P8 (Segment-10) from Antilocapra americana (Pronghorn).